We begin with the raw amino-acid sequence, 276 residues long: Large ribosomal subunit protein uL2 (276 aa).

Disordered stretches follow at residues 29–54 (PEKS…SRRR) and 224–276 (AMNP…RGQR). Basic residues predominate over residues 256–276 (YKTRSKKKPSSKLIVKRRGQR).

It belongs to the universal ribosomal protein uL2 family. In terms of assembly, part of the 50S ribosomal subunit. Forms a bridge to the 30S subunit in the 70S ribosome.

In terms of biological role, one of the primary rRNA binding proteins. Required for association of the 30S and 50S subunits to form the 70S ribosome, for tRNA binding and peptide bond formation. It has been suggested to have peptidyltransferase activity; this is somewhat controversial. Makes several contacts with the 16S rRNA in the 70S ribosome. This Maridesulfovibrio salexigens (strain ATCC 14822 / DSM 2638 / NCIMB 8403 / VKM B-1763) (Desulfovibrio salexigens) protein is Large ribosomal subunit protein uL2.